A 257-amino-acid polypeptide reads, in one-letter code: Small ribosomal subunit protein uS2 (257 aa).

This sequence belongs to the universal ribosomal protein uS2 family.

This chain is Small ribosomal subunit protein uS2, found in Ruegeria pomeroyi (strain ATCC 700808 / DSM 15171 / DSS-3) (Silicibacter pomeroyi).